Here is a 319-residue protein sequence, read N- to C-terminus: Ribonucleoside-diphosphate reductase small chain (319 aa).

The interaction with R1 stretch occupies residues 313-319 (FSLDVDF).

It belongs to the ribonucleoside diphosphate reductase small chain family. Interacts with RNR1/OPG080 subunit. Can interact with host RNR1 supunit. It depends on Fe cation as a cofactor.

The enzyme catalyses a 2'-deoxyribonucleoside 5'-diphosphate + [thioredoxin]-disulfide + H2O = a ribonucleoside 5'-diphosphate + [thioredoxin]-dithiol. Its function is as follows. Ribonucleoside-diphosphate reductase holoenzyme provides the precursors necessary for viral DNA synthesis. Allows virus growth in non-dividing cells. Catalyzes the biosynthesis of deoxyribonucleotides from the corresponding ribonucleotides. The protein is Ribonucleoside-diphosphate reductase small chain (OPG048) of Cynomys gunnisoni (Gunnison's prairie dog).